We begin with the raw amino-acid sequence, 476 residues long: MIAPDLTMDIPTELGRVHFVGIGGSGMSGIARLFLAAGHRVTGSDSRDSDAVQALRELGAEIHVGHDAAHVGDADALVVTGALWQDNPEYVLAKERGLPILHRSQALAWLISGQRLVAVAGAHGKTTSTGMIVTALLEAGRDPSFVNGGVIGGLGVSSAPGSEELFVVEADESDGSFLLYDTSVALITNVDADHLDHYGSHEAFDDAFVRFASAASELVVISSDDPGARRVTARIEGRVVTFGEDPAADIRITDIVTDGPVAFTLTHDGVSRRAALRVPGRHNAINAAGAYAVLVGLGVDPDDAIAGLAGFSGTGRRFELHAEVRGVSVYDDYAHHPTEVRAALEAARTVVGEGRIIAVHQPHLYSRTRMMAGDFARVYEELADHTIVLDVFGAREDPIPGVTGALVSECFEDAGHVDYLPDWQEAADRAAEIARDGDFIVTLSCGDVYRIIPQVIAALERPAGSPQPAASSRPRE.

121 to 127 (GAHGKTT) contributes to the ATP binding site.

It belongs to the MurCDEF family.

It is found in the cytoplasm. The enzyme catalyses UDP-N-acetyl-alpha-D-muramate + L-alanine + ATP = UDP-N-acetyl-alpha-D-muramoyl-L-alanine + ADP + phosphate + H(+). Its pathway is cell wall biogenesis; peptidoglycan biosynthesis. Functionally, cell wall formation. This Clavibacter michiganensis subsp. michiganensis (strain NCPPB 382) protein is UDP-N-acetylmuramate--L-alanine ligase.